The chain runs to 597 residues: Aspartate--tRNA(Asp/Asn) ligase (597 aa).

Glu178 is an L-aspartate binding site. The aspartate stretch occupies residues Gln202–Lys205. Arg224 serves as a coordination point for L-aspartate. ATP contacts are provided by residues Arg224–Glu226 and Gln233. Residue His458 coordinates L-aspartate. Glu488 is a binding site for ATP. Residue Arg495 coordinates L-aspartate. Gly540–Arg543 is a binding site for ATP.

This sequence belongs to the class-II aminoacyl-tRNA synthetase family. Type 1 subfamily. As to quaternary structure, homodimer.

It is found in the cytoplasm. It carries out the reaction tRNA(Asx) + L-aspartate + ATP = L-aspartyl-tRNA(Asx) + AMP + diphosphate. Its function is as follows. Aspartyl-tRNA synthetase with relaxed tRNA specificity since it is able to aspartylate not only its cognate tRNA(Asp) but also tRNA(Asn). Reaction proceeds in two steps: L-aspartate is first activated by ATP to form Asp-AMP and then transferred to the acceptor end of tRNA(Asp/Asn). The polypeptide is Aspartate--tRNA(Asp/Asn) ligase (Cyanothece sp. (strain PCC 7425 / ATCC 29141)).